The chain runs to 537 residues: CTP synthase (537 aa).

Positions 1-265 are amidoligase domain; it reads MVHFIFVTGG…DNKVLKFFNI (265 aa). A CTP-binding site is contributed by Ser-13. UTP is bound at residue Ser-13. Residues 14–19 and Asp-71 contribute to the ATP site; that span reads SLGKGL. Residues Asp-71 and Glu-139 each contribute to the Mg(2+) site. CTP contacts are provided by residues 146–148 and Lys-222; that span reads DIE. Residue Lys-222 coordinates UTP. The Glutamine amidotransferase type-1 domain maps to 290-536; sequence RIAIIAKYHK…IKAAIEYNKC (247 aa). Residue Gly-352 coordinates L-glutamine. Cys-379 (nucleophile; for glutamine hydrolysis) is an active-site residue. L-glutamine is bound by residues 380–383, Glu-403, and Arg-464; that span reads FGMQ. Catalysis depends on residues His-509 and Glu-511.

The protein belongs to the CTP synthase family. Homotetramer.

It carries out the reaction UTP + L-glutamine + ATP + H2O = CTP + L-glutamate + ADP + phosphate + 2 H(+). The enzyme catalyses L-glutamine + H2O = L-glutamate + NH4(+). The catalysed reaction is UTP + NH4(+) + ATP = CTP + ADP + phosphate + 2 H(+). The protein operates within pyrimidine metabolism; CTP biosynthesis via de novo pathway; CTP from UDP: step 2/2. Allosterically activated by GTP, when glutamine is the substrate; GTP has no effect on the reaction when ammonia is the substrate. The allosteric effector GTP functions by stabilizing the protein conformation that binds the tetrahedral intermediate(s) formed during glutamine hydrolysis. Inhibited by the product CTP, via allosteric rather than competitive inhibition. Functionally, catalyzes the ATP-dependent amination of UTP to CTP with either L-glutamine or ammonia as the source of nitrogen. Regulates intracellular CTP levels through interactions with the four ribonucleotide triphosphates. The polypeptide is CTP synthase (Rickettsia conorii (strain ATCC VR-613 / Malish 7)).